A 304-amino-acid chain; its full sequence is N-acetyl-D-glucosamine kinase (304 aa).

ATP-binding positions include 4–11 (GFDMGGTK) and 133–140 (GLGGGLVI). Zn(2+) contacts are provided by His157, Cys177, Cys179, and Cys184.

This sequence belongs to the ROK (NagC/XylR) family. NagK subfamily.

The enzyme catalyses N-acetyl-D-glucosamine + ATP = N-acetyl-D-glucosamine 6-phosphate + ADP + H(+). Its pathway is cell wall biogenesis; peptidoglycan recycling. Catalyzes the phosphorylation of N-acetyl-D-glucosamine (GlcNAc) derived from cell-wall degradation, yielding GlcNAc-6-P. This is N-acetyl-D-glucosamine kinase from Pectobacterium atrosepticum (strain SCRI 1043 / ATCC BAA-672) (Erwinia carotovora subsp. atroseptica).